Consider the following 378-residue polypeptide: Copper-containing nitrite reductase (378 aa).

The tat-type signal signal peptide spans 1–38 (MTEQLQMTRRTMLAGAALAGAVAPLLHTAQAHAAGAAA). 2 Plastocyanin-like domains span residues 39 to 213 (AAGA…YDKI) and 214 to 378 (YYVG…PASM). 7 residues coordinate Cu cation: His133, His138, His173, Cys174, His183, Met188, and His344.

The protein belongs to the multicopper oxidase family. Homotrimer. The cofactor is Cu(+). Requires Cu(2+) as cofactor. FAD is required as a cofactor. Predicted to be exported by the Tat system. The position of the signal peptide cleavage has been experimentally proven.

The protein resides in the periplasm. It carries out the reaction nitric oxide + Fe(III)-[cytochrome c] + H2O = Fe(II)-[cytochrome c] + nitrite + 2 H(+). It functions in the pathway nitrogen metabolism; nitrate reduction (denitrification); dinitrogen from nitrate: step 2/4. This is Copper-containing nitrite reductase (nirK) from Achromobacter cycloclastes.